A 459-amino-acid chain; its full sequence is tRNA modification GTPase MnmE (459 aa).

Residues arginine 30, glutamate 93, and lysine 132 each coordinate (6S)-5-formyl-5,6,7,8-tetrahydrofolate. The TrmE-type G domain occupies glycine 226–lysine 381. Asparagine 236 provides a ligand contact to K(+). GTP contacts are provided by residues asparagine 236–threonine 241, threonine 255–threonine 261, and aspartate 280–glycine 283. Serine 240 contributes to the Mg(2+) binding site. Threonine 255, isoleucine 257, and threonine 260 together coordinate K(+). Position 261 (threonine 261) interacts with Mg(2+). Residue lysine 459 participates in (6S)-5-formyl-5,6,7,8-tetrahydrofolate binding.

This sequence belongs to the TRAFAC class TrmE-Era-EngA-EngB-Septin-like GTPase superfamily. TrmE GTPase family. In terms of assembly, homodimer. Heterotetramer of two MnmE and two MnmG subunits. It depends on K(+) as a cofactor.

It is found in the cytoplasm. Exhibits a very high intrinsic GTPase hydrolysis rate. Involved in the addition of a carboxymethylaminomethyl (cmnm) group at the wobble position (U34) of certain tRNAs, forming tRNA-cmnm(5)s(2)U34. This Fervidobacterium nodosum (strain ATCC 35602 / DSM 5306 / Rt17-B1) protein is tRNA modification GTPase MnmE.